A 476-amino-acid chain; its full sequence is Bifunctional protein HldE (476 aa).

The ribokinase stretch occupies residues 1 to 319 (MKLTLPDYDQ…EAIYGSQDSG (319 aa)). Position 195 to 198 (195 to 198 (NLSE)) interacts with ATP. The active site involves Asp-264. The interval 344-476 (MTNGCFDILH…IIEAIRGGKG (133 aa)) is cytidylyltransferase.

The protein in the N-terminal section; belongs to the carbohydrate kinase PfkB family. This sequence in the C-terminal section; belongs to the cytidylyltransferase family. Homodimer.

It carries out the reaction D-glycero-beta-D-manno-heptose 7-phosphate + ATP = D-glycero-beta-D-manno-heptose 1,7-bisphosphate + ADP + H(+). It catalyses the reaction D-glycero-beta-D-manno-heptose 1-phosphate + ATP + H(+) = ADP-D-glycero-beta-D-manno-heptose + diphosphate. Its pathway is nucleotide-sugar biosynthesis; ADP-L-glycero-beta-D-manno-heptose biosynthesis; ADP-L-glycero-beta-D-manno-heptose from D-glycero-beta-D-manno-heptose 7-phosphate: step 1/4. The protein operates within nucleotide-sugar biosynthesis; ADP-L-glycero-beta-D-manno-heptose biosynthesis; ADP-L-glycero-beta-D-manno-heptose from D-glycero-beta-D-manno-heptose 7-phosphate: step 3/4. Catalyzes the phosphorylation of D-glycero-D-manno-heptose 7-phosphate at the C-1 position to selectively form D-glycero-beta-D-manno-heptose-1,7-bisphosphate. Its function is as follows. Catalyzes the ADP transfer from ATP to D-glycero-beta-D-manno-heptose 1-phosphate, yielding ADP-D-glycero-beta-D-manno-heptose. This Photobacterium profundum (strain SS9) protein is Bifunctional protein HldE.